Reading from the N-terminus, the 530-residue chain is Autoinducer-2 kinase (530 aa).

This sequence belongs to the FGGY kinase family.

The protein resides in the cytoplasm. The enzyme catalyses (S)-4,5-dihydroxypentane-2,3-dione + ATP = (2S)-2-hydroxy-3,4-dioxopentyl phosphate + ADP + H(+). Catalyzes the phosphorylation of autoinducer-2 (AI-2) to phospho-AI-2, which subsequently inactivates the transcriptional regulator LsrR and leads to the transcription of the lsr operon. Phosphorylates the ring-open form of (S)-4,5-dihydroxypentane-2,3-dione (DPD), which is the precursor to all AI-2 signaling molecules, at the C5 position. This is Autoinducer-2 kinase from Yersinia pestis bv. Antiqua (strain Antiqua).